Reading from the N-terminus, the 153-residue chain is Superoxide dismutase [Cu-Zn] (153 aa).

Cu cation contacts are provided by His-45, His-47, and His-62. Cys-56 and Cys-145 are oxidised to a cystine. The Zn(2+) site is built by His-62, His-70, His-79, and Asp-82. Position 119 (His-119) interacts with Cu cation.

The protein belongs to the Cu-Zn superoxide dismutase family. Homodimer. Requires Cu cation as cofactor. The cofactor is Zn(2+).

The protein resides in the cytoplasm. It carries out the reaction 2 superoxide + 2 H(+) = H2O2 + O2. Its function is as follows. Destroys radicals which are normally produced within the cells and which are toxic to biological systems. The polypeptide is Superoxide dismutase [Cu-Zn] (Drosophila orena (Fruit fly)).